The primary structure comprises 122 residues: Large ribosomal subunit protein bL12 (122 aa).

This sequence belongs to the bacterial ribosomal protein bL12 family. As to quaternary structure, homodimer. Part of the ribosomal stalk of the 50S ribosomal subunit. Forms a multimeric L10(L12)X complex, where L10 forms an elongated spine to which 2 to 4 L12 dimers bind in a sequential fashion. Binds GTP-bound translation factors.

Its function is as follows. Forms part of the ribosomal stalk which helps the ribosome interact with GTP-bound translation factors. Is thus essential for accurate translation. In Enterococcus faecalis (strain ATCC 700802 / V583), this protein is Large ribosomal subunit protein bL12.